The sequence spans 266 residues: Glucosamine-6-phosphate deaminase (266 aa).

The active-site Proton acceptor; for enolization step is Asp72. Asp141 functions as the For ring-opening step in the catalytic mechanism. His143 functions as the Proton acceptor; for ring-opening step in the catalytic mechanism. Glu148 functions as the For ring-opening step in the catalytic mechanism.

It belongs to the glucosamine/galactosamine-6-phosphate isomerase family. NagB subfamily. As to quaternary structure, homohexamer; trimer of disulfide-linked dimers.

It catalyses the reaction alpha-D-glucosamine 6-phosphate + H2O = beta-D-fructose 6-phosphate + NH4(+). It participates in amino-sugar metabolism; N-acetylneuraminate degradation; D-fructose 6-phosphate from N-acetylneuraminate: step 5/5. Allosterically activated by N-acetylglucosamine 6-phosphate (GlcNAc6P). In terms of biological role, catalyzes the reversible isomerization-deamination of glucosamine 6-phosphate (GlcN6P) to form fructose 6-phosphate (Fru6P) and ammonium ion. The sequence is that of Glucosamine-6-phosphate deaminase from Shigella boydii serotype 18 (strain CDC 3083-94 / BS512).